An 81-amino-acid polypeptide reads, in one-letter code: Photosystem I iron-sulfur center (81 aa).

4Fe-4S ferredoxin-type domains are found at residues 2–31 (SHTV…MVPW) and 37–68 (GQIA…VRVY). Cys11, Cys14, Cys17, Cys21, Cys48, Cys51, Cys54, and Cys58 together coordinate [4Fe-4S] cluster.

In terms of assembly, the eukaryotic PSI reaction center is composed of at least 11 subunits. [4Fe-4S] cluster serves as cofactor.

The protein localises to the plastid. It localises to the chloroplast thylakoid membrane. It catalyses the reaction reduced [plastocyanin] + hnu + oxidized [2Fe-2S]-[ferredoxin] = oxidized [plastocyanin] + reduced [2Fe-2S]-[ferredoxin]. Functionally, apoprotein for the two 4Fe-4S centers FA and FB of photosystem I (PSI); essential for photochemical activity. FB is the terminal electron acceptor of PSI, donating electrons to ferredoxin. The C-terminus interacts with PsaA/B/D and helps assemble the protein into the PSI complex. Required for binding of PsaD and PsaE to PSI. PSI is a plastocyanin/cytochrome c6-ferredoxin oxidoreductase, converting photonic excitation into a charge separation, which transfers an electron from the donor P700 chlorophyll pair to the spectroscopically characterized acceptors A0, A1, FX, FA and FB in turn. The sequence is that of Photosystem I iron-sulfur center from Thalassiosira pseudonana (Marine diatom).